Reading from the N-terminus, the 208-residue chain is Large ribosomal subunit protein uL3 (208 aa).

At Q149 the chain carries N5-methylglutamine.

This sequence belongs to the universal ribosomal protein uL3 family. In terms of assembly, part of the 50S ribosomal subunit. Forms a cluster with proteins L14 and L19. In terms of processing, methylated by PrmB.

One of the primary rRNA binding proteins, it binds directly near the 3'-end of the 23S rRNA, where it nucleates assembly of the 50S subunit. This Haemophilus influenzae (strain 86-028NP) protein is Large ribosomal subunit protein uL3.